Here is a 191-residue protein sequence, read N- to C-terminus: Small ribosomal subunit protein eS7y (191 aa).

An N-acetylmethionine modification is found at Met1. The stretch at 17–50 (TEFEEQVTQALFDLENTNQELKSELKDLYINQAV) forms a coiled coil.

Belongs to the eukaryotic ribosomal protein eS7 family.

This is Small ribosomal subunit protein eS7y (RPS7B) from Arabidopsis thaliana (Mouse-ear cress).